We begin with the raw amino-acid sequence, 474 residues long: tRNA modification GTPase MnmE (474 aa).

3 residues coordinate (6S)-5-formyl-5,6,7,8-tetrahydrofolate: Arg-28, Glu-92, and Arg-131. The 169-residue stretch at 227–395 (GIPVAIVGTT…LKGELTQIME (169 aa)) folds into the TrmE-type G domain. Asn-237 is a K(+) binding site. GTP contacts are provided by residues 237-242 (NVGKST), 256-262 (SDIHGTT), 281-284 (DTAG), and 376-378 (SAR). Ser-241 lines the Mg(2+) pocket. Ser-256, Ile-258, and Thr-261 together coordinate K(+). Thr-262 serves as a coordination point for Mg(2+). Lys-474 serves as a coordination point for (6S)-5-formyl-5,6,7,8-tetrahydrofolate.

The protein belongs to the TRAFAC class TrmE-Era-EngA-EngB-Septin-like GTPase superfamily. TrmE GTPase family. In terms of assembly, homodimer. Heterotetramer of two MnmE and two MnmG subunits. Requires K(+) as cofactor.

The protein resides in the cytoplasm. In terms of biological role, exhibits a very high intrinsic GTPase hydrolysis rate. Involved in the addition of a carboxymethylaminomethyl (cmnm) group at the wobble position (U34) of certain tRNAs, forming tRNA-cmnm(5)s(2)U34. In Porphyromonas gingivalis (strain ATCC BAA-308 / W83), this protein is tRNA modification GTPase MnmE.